The following is a 215-amino-acid chain: Pyrrolidone-carboxylate peptidase (215 aa).

Catalysis depends on residues Glu80, Cys143, and His167.

It belongs to the peptidase C15 family. As to quaternary structure, homotetramer.

Its subcellular location is the cytoplasm. The enzyme catalyses Release of an N-terminal pyroglutamyl group from a polypeptide, the second amino acid generally not being Pro.. Removes 5-oxoproline from various penultimate amino acid residues except L-proline. The sequence is that of Pyrrolidone-carboxylate peptidase from Pectobacterium carotovorum subsp. carotovorum (strain PC1).